The sequence spans 114 residues: Tyrosine-protein phosphatase 13 (114 aa).

The region spanning 1–114 (WRMLWEHNST…QFGQEGPITI (114 aa)) is the Tyrosine-protein phosphatase domain. E82 contributes to the substrate binding site.

The protein belongs to the protein-tyrosine phosphatase family.

The catalysed reaction is O-phospho-L-tyrosyl-[protein] + H2O = L-tyrosyl-[protein] + phosphate. The sequence is that of Tyrosine-protein phosphatase 13 (STY-13) from Styela plicata (Wrinkled sea squirt).